The sequence spans 504 residues: Anaerobic nitric oxide reductase transcription regulator NorR (504 aa).

Asp-57 is modified (4-aspartylphosphate). The 230-residue stretch at 187–416 (MIGLSPGMTQ…LEHAIHRAVV (230 aa)) folds into the Sigma-54 factor interaction domain. ATP-binding positions include 215–222 (GETGTGKE) and 278–287 (ADNGTLFLDE). The H-T-H motif DNA-binding region spans 479–498 (WAACARMLETDVANLHRLAK).

It participates in nitrogen metabolism; nitric oxide reduction. Functionally, required for the expression of anaerobic nitric oxide (NO) reductase, acts as a transcriptional activator for at least the norVW operon. Activation also requires sigma-54. The protein is Anaerobic nitric oxide reductase transcription regulator NorR of Escherichia coli (strain ATCC 8739 / DSM 1576 / NBRC 3972 / NCIMB 8545 / WDCM 00012 / Crooks).